Reading from the N-terminus, the 157-residue chain is Small ribosomal subunit protein uS7 (157 aa).

Belongs to the universal ribosomal protein uS7 family. Part of the 30S ribosomal subunit. Contacts proteins S9 and S11.

Functionally, one of the primary rRNA binding proteins, it binds directly to 16S rRNA where it nucleates assembly of the head domain of the 30S subunit. Is located at the subunit interface close to the decoding center, probably blocks exit of the E-site tRNA. The chain is Small ribosomal subunit protein uS7 from Psychrobacter cryohalolentis (strain ATCC BAA-1226 / DSM 17306 / VKM B-2378 / K5).